Here is a 218-residue protein sequence, read N- to C-terminus: Small ribosomal subunit protein uS3c (218 aa).

In terms of domain architecture, KH type-2 spans 47–118 (VQKHMRISSG…RLNIAIARVP (72 aa)).

It belongs to the universal ribosomal protein uS3 family. Part of the 30S ribosomal subunit.

The protein localises to the plastid. Its subcellular location is the chloroplast. The chain is Small ribosomal subunit protein uS3c (rps3) from Nuphar advena (Common spatterdock).